Reading from the N-terminus, the 176-residue chain is Inorganic pyrophosphatase (176 aa).

Lys30, Arg44, and Tyr56 together coordinate substrate. Asp66, Asp71, and Asp103 together coordinate Mg(2+). Position 142 (Tyr142) interacts with substrate.

This sequence belongs to the PPase family. In terms of assembly, homohexamer. Requires Mg(2+) as cofactor.

The protein resides in the cytoplasm. It catalyses the reaction diphosphate + H2O = 2 phosphate + H(+). In terms of biological role, catalyzes the hydrolysis of inorganic pyrophosphate (PPi) forming two phosphate ions. The sequence is that of Inorganic pyrophosphatase from Brucella melitensis biotype 1 (strain ATCC 23456 / CCUG 17765 / NCTC 10094 / 16M).